We begin with the raw amino-acid sequence, 598 residues long: Nuclear receptor subfamily 4 group A member 2 (598 aa).

Residues 1 to 22 are disordered; that stretch reads MPCVQAQYGSSPQGASPASQSY. The span at 8–22 shows a compositional bias: low complexity; sequence YGSSPQGASPASQSY. The nuclear receptor DNA-binding region spans 260-335; it reads EGLCAVCGDN…VGMVKEVVRT (76 aa). NR C4-type zinc fingers lie at residues 263 to 283 and 299 to 318; these read CAVC…CEGC and CLAN…CQYC. The short motif at 287–314 is the Bipartite nuclear localization signal (NLS1) element; it reads FKRTVQKNAKYVCLANKNCPVDKRRRNR. Residues 337–361 form a disordered region; the sequence is SLKGRRGRLPSKPKSPQEPSPPSPP. Residues 338-350 carry the Nuclear localization signal (NLS1) motif; that stretch reads LKGRRGRLPSKPK. Pro residues predominate over residues 352 to 361; the sequence is PQEPSPPSPP. Positions 360–595 constitute an NR LBD domain; sequence PPVSLISALV…AIIDKLFLDT (236 aa). The short motif at 443–452 is the nuclear export sequence (NES1) element; that stretch reads FLELFVLRLA. The nuclear export sequence (NES2) signature appears at 568 to 577; the sequence is QGLQRIFYLK.

Belongs to the nuclear hormone receptor family. NR4 subfamily. In terms of assembly, interacts with SFPQ, NCOR2, SIN3A and HADC1. The interaction with NCOR2 increases in the absence of PITX3. Interacts with PER2.

The protein resides in the cytoplasm. The protein localises to the nucleus. Transcriptional regulator which is important for the differentiation and maintenance of meso-diencephalic dopaminergic (mdDA) neurons during development. It is crucial for expression of a set of genes such as SLC6A3, SLC18A2, TH and DRD2 which are essential for development of mdDA neurons. This Bos taurus (Bovine) protein is Nuclear receptor subfamily 4 group A member 2 (NR4A2).